The primary structure comprises 127 residues: Large ribosomal subunit protein bL21 (127 aa).

This sequence belongs to the bacterial ribosomal protein bL21 family. Part of the 50S ribosomal subunit. Contacts protein L20.

In terms of biological role, this protein binds to 23S rRNA in the presence of protein L20. The sequence is that of Large ribosomal subunit protein bL21 from Blochmanniella floridana.